A 494-amino-acid polypeptide reads, in one-letter code: GTPase Der (494 aa).

2 EngA-type G domains span residues 3–166 (PVIA…MDAE) and 207–380 (IKLA…DCST). GTP contacts are provided by residues 9-16 (GRPNVGKS), 56-60 (DTGGI), 118-121 (NKTD), 213-220 (GRPNVGKS), 260-264 (DTAGV), and 325-328 (NKWD). The 85-residue stretch at 381 to 465 (KRVGTSLLTR…PIRIQFKEGE (85 aa)) folds into the KH-like domain.

It belongs to the TRAFAC class TrmE-Era-EngA-EngB-Septin-like GTPase superfamily. EngA (Der) GTPase family. In terms of assembly, associates with the 50S ribosomal subunit.

In terms of biological role, GTPase that plays an essential role in the late steps of ribosome biogenesis. In Yersinia enterocolitica serotype O:8 / biotype 1B (strain NCTC 13174 / 8081), this protein is GTPase Der.